The following is a 2111-amino-acid chain: Mycocerosic acid synthase-like polyketide synthase (2111 aa).

Residues 1–15 (MTQNCVAPVAIIGMA) form the signal peptide. Cys-16 carries N-palmitoyl cysteine lipidation. Cys-16 is lipidated: S-diacylglycerol cysteine. One can recognise a Ketosynthase family 3 (KS3) domain in the interval 16 to 428 (CRLPGAINSP…GTNVHAVLEQ (413 aa)). Catalysis depends on Cys-178, which acts as the Acyl-thioester intermediate; for beta-ketoacyl synthase activity. Catalysis depends on for beta-ketoacyl synthase activity residues His-313 and His-349. A linker domain (LD) region spans residues 430-537 (PESPAETAAE…MPQQAVTNDD (108 aa)). Residues 538 to 837 (RGPVWVFSGQ…LAVFAAMRRQ (300 aa)) form an acyltransferase (AT) region. The active-site Acyl-ester intermediate; for acyltransferase activity is Ser-629. The interval 896 to 1176 (PSVSVHPLLG…LSAMGLQLGT (281 aa)) is dehydratase (DH). The segment at 901 to 1025 (HPLLGSHVVL…GDVDAERPAA (125 aa)) is N-terminal hotdog fold. The PKS/mFAS DH domain occupies 901-1183 (HPLLGSHVVL…LGTGNSDKAE (283 aa)). The active-site Proton acceptor; for dehydratase activity is His-934. The C-terminal hotdog fold stretch occupies residues 1036–1183 (PNRVDGDELR…LGTGNSDKAE (148 aa)). Asp-1100 functions as the Proton donor; for dehydratase activity in the catalytic mechanism. The interval 1215–1391 (SWLVILAGDD…SPEDETAWRD (177 aa)) is pseudo beta-ketoacyl reductase (PsiKR). The enoylreductase (ER) stretch occupies residues 1419-1743 (EGMRLVVRNP…QHTGKLVIDI (325 aa)). The segment at 1765–2008 (GAYVITGGLG…RSPFAELFLA (244 aa)) is beta-ketoacyl reductase (KR). Residues 1773–1776 (LGGL), 1796–1799 (SRSA), 1824–1825 (DI), and 1902–1903 (FS) contribute to the NADP(+) site. A Carrier domain is found at 2029–2104 (EEWPTHLRRL…QRLCEMLDTD (76 aa)). At Ser-2064 the chain carries O-(pantetheine 4'-phosphoryl)serine.

In terms of assembly, homodimer.

It is found in the cell membrane. It participates in lipid metabolism; fatty acid biosynthesis. Polyketide synthase involved in the biosynthesis of 2,4-dimethyl-2-eicosenoic acid, a lipid component of the lipooligosaccharides (LOS) which are not located at the bacterial surface but rather in deeper compartments of the cell envelope of M.smegmatis. The protein is Mycocerosic acid synthase-like polyketide synthase of Mycolicibacterium smegmatis (strain ATCC 700084 / mc(2)155) (Mycobacterium smegmatis).